A 540-amino-acid polypeptide reads, in one-letter code: Cytochrome P450 monooxygenase ptmG (540 aa).

N-linked (GlcNAc...) asparagine glycosylation occurs at N17. The next 2 helical transmembrane spans lie at 20 to 40 (VMTL…YICI) and 325 to 345 (AAFL…FLLL). Position 474 (C474) interacts with heme.

The protein belongs to the cytochrome P450 family. Requires heme as cofactor.

It is found in the membrane. It participates in secondary metabolite biosynthesis. Its function is as follows. Cytochrome P450 monooxygenase; part of the gene cluster that mediates the biosynthesis of the indole diterpenes penitrems. The geranylgeranyl diphosphate (GGPP) synthase ptmG catalyzes the first step in penitrem biosynthesis via conversion of farnesyl pyrophosphate and isopentyl pyrophosphate into geranylgeranyl pyrophosphate (GGPP). Condensation of indole-3-glycerol phosphate with GGPP by the prenyl transferase ptmC then forms 3-geranylgeranylindole (3-GGI). Epoxidation by the FAD-dependent monooxygenase ptmM leads to a epoxidized-GGI that is substrate of the terpene cyclase ptmB for cyclization to yield paspaline. Paspaline is subsequently converted to 13-desoxypaxilline by the cytochrome P450 monooxygenase ptmP, the latter being then converted to paxilline by the cytochrome P450 monooxygenase ptmQ. Paxilline is converted to beta-paxitriol via C-10 ketoreduction by the short-chain dehydrogenase ptmH which can be monoprenylated at the C-20 by the indole diterpene prenyltransferase ptmD. A two-step elimination (acetylation and elimination) process performed by the O-acetyltransferase ptmV and ptmI leads to the production of the prenylated form of penijanthine. The FAD-linked oxidoreductase ptmO then converts the prenylated form of penijanthine into PC-M5 which is in turn transformed into PC-M4 by the aromatic dimethylallyltransferase ptmE. Five sequential oxidative transformations performed by the cytochrome P450 monooxygenases ptmK, ptmU, ptmL, ptmN and ptmJ yield the various penitrem compounds. PtmK, ptmU and ptmM are involved in the formation of the key bicyclic ring of penitrem C via the formation of the intermediates secopenitrem D and penitrem D. PtmL catalyzes the epoxidation of penitrem D and C to yield penitrem B and F, respectively. PtmJ catalyzes the last benzylic hydroxylation to convert penitrem B to prenitrem E and penitrem F to penitrem A. This chain is Cytochrome P450 monooxygenase ptmG, found in Penicillium ochrochloron.